The primary structure comprises 368 residues: Reverse transcriptase-like protein (368 aa).

The Reverse transcriptase domain maps to 91 to 318 (TRELTVPYWY…SELNWLGHKV (228 aa)).

The protein resides in the mitochondrion. The chain is Reverse transcriptase-like protein (RTL) from Chlamydomonas reinhardtii (Chlamydomonas smithii).